Here is a 183-residue protein sequence, read N- to C-terminus: Ribosome rescue factor SmrB (183 aa).

A Smr domain is found at L98–E173.

This sequence belongs to the SmrB family. As to quaternary structure, associates with collided ribosomes, but not with correctly translating polysomes.

In terms of biological role, acts as a ribosome collision sensor. Detects stalled/collided disomes (pairs of ribosomes where the leading ribosome is stalled and a second ribosome has collided with it) and endonucleolytically cleaves mRNA at the 5' boundary of the stalled ribosome. Stalled/collided disomes form a new interface (primarily via the 30S subunits) that binds SmrB. Cleaved mRNA becomes available for tmRNA ligation, leading to ribosomal subunit dissociation and rescue of stalled ribosomes. The sequence is that of Ribosome rescue factor SmrB from Escherichia coli (strain 55989 / EAEC).